Reading from the N-terminus, the 428-residue chain is Aspartate--tRNA(Asp) ligase (428 aa).

Glu-166 lines the L-aspartate pocket. The tract at residues 188-191 is aspartate; sequence QLYK. Residue Arg-210 coordinates L-aspartate. ATP-binding positions include 210-212, 218-220, and Glu-351; these read RAE and RHL. Residues Glu-351 and Ser-354 each coordinate Mg(2+). L-aspartate-binding residues include Ser-354 and Arg-358. 399–402 provides a ligand contact to ATP; that stretch reads GLER.

It belongs to the class-II aminoacyl-tRNA synthetase family. Type 2 subfamily. In terms of assembly, homodimer. Mg(2+) is required as a cofactor.

The protein localises to the cytoplasm. It catalyses the reaction tRNA(Asp) + L-aspartate + ATP = L-aspartyl-tRNA(Asp) + AMP + diphosphate. In terms of biological role, catalyzes the attachment of L-aspartate to tRNA(Asp) in a two-step reaction: L-aspartate is first activated by ATP to form Asp-AMP and then transferred to the acceptor end of tRNA(Asp). This Thermoplasma acidophilum (strain ATCC 25905 / DSM 1728 / JCM 9062 / NBRC 15155 / AMRC-C165) protein is Aspartate--tRNA(Asp) ligase.